The following is a 258-amino-acid chain: 5'-nucleotidase SurE (258 aa).

4 residues coordinate a divalent metal cation: Asp-16, Asp-17, Ser-47, and Asn-99.

It belongs to the SurE nucleotidase family. A divalent metal cation is required as a cofactor.

It localises to the cytoplasm. The catalysed reaction is a ribonucleoside 5'-phosphate + H2O = a ribonucleoside + phosphate. Functionally, nucleotidase that shows phosphatase activity on nucleoside 5'-monophosphates. The protein is 5'-nucleotidase SurE of Coxiella burnetii (strain CbuK_Q154) (Coxiella burnetii (strain Q154)).